Reading from the N-terminus, the 478-residue chain is Septin-4 (478 aa).

The segment at 1-115 (MDHSLGWQGN…RSPWGKLDPY (115 aa)) is disordered. A phosphoserine mark is found at Ser-28, Ser-29, and Ser-68. A compositionally biased stretch (polar residues) spans 84–93 (PQPSDSQQYF). The segment covering 94–108 (SAPAPLSPSSRPRSP) has biased composition (low complexity). 2 positions are modified to phosphoserine: Ser-117 and Ser-118. The Septin-type G domain maps to 141–414 (KGFDFTLMVA…ENYRAQCIQS (274 aa)). The interval 151-158 (GESGLGKS) is G1 motif. Residues 151 to 158 (GESGLGKS) and Thr-185 each bind GTP. Residues 208–211 (DTPG) form a G3 motif region. The segment at 289–292 (AKAD) is G4 motif. GTP is bound at residue 290–298 (KADTLTPPE). Residue Ser-325 is modified to Phosphoserine. GTP contacts are provided by Gly-348 and Arg-363. Residues 428 to 449 (LTRESGTDFPIPAVPPGTDPET) form a disordered region. At Ser-432 the chain carries Phosphoserine. At Thr-434 the chain carries Phosphothreonine. Positions 447–478 (PETEKLIREKDEELRRMQEMLHKIQRQMKETH) form a coiled coil.

This sequence belongs to the TRAFAC class TrmE-Era-EngA-EngB-Septin-like GTPase superfamily. Septin GTPase family. In terms of assembly, septins polymerize into heterooligomeric protein complexes that form filaments, and can associate with cellular membranes, actin filaments and microtubules. GTPase activity is required for filament formation. Interacts with SEPTIN8. Component of a septin core octameric complex consisting of SEPTIN12, SEPTIN7, SEPTIN6 and SEPTIN2 or SEPTIN4 in the order 12-7-6-2-2-6-7-12 or 12-7-6-4-4-6-7-12. Interacts with SEPTIN14 (via C-terminus). Interacts with DYRK1A. Interacts with SLC6A3/DAT and SNCA/alpha-synuclein. Interacts with STX1A; in the striatum. Interacts with XIAP (via BIR3 domain) following the induction of apoptosis. Interacts with AREL1 (via HECT domain); in the cytoplasm following induction of apoptosis. Interacts with DPYSL5. Post-translationally, phosphorylated by DYRK1A. Ubiquitinated by AREL1. In terms of processing, may be phosphorylated. Expressed in the cerebral cortex, striatum, midbrain, cerebellum and spinal cord (at protein level). Expressed in the substantia nigra pars compacta, ventral tegmental area, projection fiber bundles and in axon terminals surrounding striatal neurons (at protein level). Expressed in hair follicle stem cells (at protein level). Expressed in small intestinal crypts; abundantly expressed at the crypt base (at protein level). Widely expressed in the brain and to a lesser extent in the testis, lung and liver. In terms of tissue distribution, highly expressed in the brain and testis and, to a lesser extent in the heart, lung and kidney. In the brain, abundant in areas of high cell density, particularly in the stria terminalis. Expressed in the entorhinal, temporal and visual cortices and the hippocampus of the brain where is colocalizes with DYRK1A in postnatal day 1 and adult mice. Expressed and extensively colocalizes with DYRK1A in apical dendrites of pyramidal cells. As to expression, predominantly expressed in embryonic brain and dorsal root ganglion neurons. Expressed in LGR5-positive intestinal stem cells and lysozyme-positive Paneth cells (at protein level). Expressed in the brain and testis.

The protein resides in the cytoplasm. It localises to the cell projection. Its subcellular location is the cilium. The protein localises to the flagellum. It is found in the cytoplasmic vesicle. The protein resides in the secretory vesicle. It localises to the axon. Its subcellular location is the dendrite. The protein localises to the perikaryon. It is found in the synapse. The protein resides in the mitochondrion. It localises to the cytosol. Its function is as follows. Filament-forming cytoskeletal GTPase. Pro-apoptotic protein involved in LGR5-positive intestinal stem cell and Paneth cell expansion in the intestines, via its interaction with XIAP. May also play a role in the regulation of cell fate in the intestine. Positive regulator of apoptosis involved in hematopoietic stem cell homeostasis; via its interaction with XIAP. Negative regulator of repair and hair follicle regeneration in response to injury, due to inhibition of hair follicle stem cell proliferation, potentially via its interaction with XIAP. Plays an important role in male fertility and sperm motility. During spermiogenesis, essential for the establishment of the annulus (a fibrous ring structure connecting the midpiece and the principal piece of the sperm flagellum) which is a requisite for the structural and mechanical integrity of the sperm. Involved in the migration of cortical neurons and the formation of neuron leading processes during embryonic development. Required for dopaminergic metabolism in presynaptic autoreceptors; potentially via activity as a presynaptic scaffold protein. This chain is Septin-4, found in Mus musculus (Mouse).